The following is a 355-amino-acid chain: Sulfate/thiosulfate import ATP-binding protein CysA (355 aa).

In terms of domain architecture, ABC transporter spans 3-233; it reads IIINNVSKQF…PASPFVMGFI (231 aa). 35–42 contacts ATP; that stretch reads GPSGSGKS.

This sequence belongs to the ABC transporter superfamily. Sulfate/tungstate importer (TC 3.A.1.6) family. The complex is composed of two ATP-binding proteins (CysA), two transmembrane proteins (CysT and CysW) and a solute-binding protein (CysP).

Its subcellular location is the cell inner membrane. The catalysed reaction is sulfate(out) + ATP + H2O = sulfate(in) + ADP + phosphate + H(+). The enzyme catalyses thiosulfate(out) + ATP + H2O = thiosulfate(in) + ADP + phosphate + H(+). Functionally, part of the ABC transporter complex CysAWTP involved in sulfate/thiosulfate import. Responsible for energy coupling to the transport system. In Synechocystis sp. (strain ATCC 27184 / PCC 6803 / Kazusa), this protein is Sulfate/thiosulfate import ATP-binding protein CysA.